The chain runs to 433 residues: Glucose-1-phosphate adenylyltransferase (433 aa).

Residues Y117, G182, 197–198 (EK), and S215 each bind alpha-D-glucose 1-phosphate.

This sequence belongs to the bacterial/plant glucose-1-phosphate adenylyltransferase family. Homotetramer.

The catalysed reaction is alpha-D-glucose 1-phosphate + ATP + H(+) = ADP-alpha-D-glucose + diphosphate. It participates in glycan biosynthesis; glycogen biosynthesis. In terms of biological role, involved in the biosynthesis of ADP-glucose, a building block required for the elongation reactions to produce glycogen. Catalyzes the reaction between ATP and alpha-D-glucose 1-phosphate (G1P) to produce pyrophosphate and ADP-Glc. This Nitrosomonas europaea (strain ATCC 19718 / CIP 103999 / KCTC 2705 / NBRC 14298) protein is Glucose-1-phosphate adenylyltransferase.